The sequence spans 70 residues: ATP synthase subunit c (70 aa).

Transmembrane regions (helical) follow at residues isoleucine 4–valine 24 and phenylalanine 47–valine 67.

This sequence belongs to the ATPase C chain family. As to quaternary structure, F-type ATPases have 2 components, F(1) - the catalytic core - and F(0) - the membrane proton channel. F(1) has five subunits: alpha(3), beta(3), gamma(1), delta(1), epsilon(1). F(0) has three main subunits: a(1), b(2) and c(10-14). The alpha and beta chains form an alternating ring which encloses part of the gamma chain. F(1) is attached to F(0) by a central stalk formed by the gamma and epsilon chains, while a peripheral stalk is formed by the delta and b chains.

It is found in the cell membrane. Its function is as follows. F(1)F(0) ATP synthase produces ATP from ADP in the presence of a proton or sodium gradient. F-type ATPases consist of two structural domains, F(1) containing the extramembraneous catalytic core and F(0) containing the membrane proton channel, linked together by a central stalk and a peripheral stalk. During catalysis, ATP synthesis in the catalytic domain of F(1) is coupled via a rotary mechanism of the central stalk subunits to proton translocation. In terms of biological role, key component of the F(0) channel; it plays a direct role in translocation across the membrane. A homomeric c-ring of between 10-14 subunits forms the central stalk rotor element with the F(1) delta and epsilon subunits. This Levilactobacillus brevis (strain ATCC 367 / BCRC 12310 / CIP 105137 / JCM 1170 / LMG 11437 / NCIMB 947 / NCTC 947) (Lactobacillus brevis) protein is ATP synthase subunit c.